The chain runs to 160 residues: SsrA-binding protein (160 aa).

Residues 136–160 (KRDTMRERDSNRELQRAVRNKGKED) form a disordered region.

Belongs to the SmpB family.

It is found in the cytoplasm. Functionally, required for rescue of stalled ribosomes mediated by trans-translation. Binds to transfer-messenger RNA (tmRNA), required for stable association of tmRNA with ribosomes. tmRNA and SmpB together mimic tRNA shape, replacing the anticodon stem-loop with SmpB. tmRNA is encoded by the ssrA gene; the 2 termini fold to resemble tRNA(Ala) and it encodes a 'tag peptide', a short internal open reading frame. During trans-translation Ala-aminoacylated tmRNA acts like a tRNA, entering the A-site of stalled ribosomes, displacing the stalled mRNA. The ribosome then switches to translate the ORF on the tmRNA; the nascent peptide is terminated with the 'tag peptide' encoded by the tmRNA and targeted for degradation. The ribosome is freed to recommence translation, which seems to be the essential function of trans-translation. The chain is SsrA-binding protein from Pseudomonas putida (strain GB-1).